We begin with the raw amino-acid sequence, 313 residues long: uncharacterized protein (313 aa).

An HTH deoR-type domain is found at 2–57 (KLERLLAMVVLLISKKQVQAAELAELFEVSVRTIYRDIETINRAGIPIVTSQGSGG). Residues 19 to 38 (VQAAELAELFEVSVRTIYRD) constitute a DNA-binding region (H-T-H motif). One can recognise a WYL domain in the interval 131–210 (HTEDQKTLRE…KDLAILHQTF (80 aa)).

It is found in the cytoplasm. This is an uncharacterized protein from Bacillus subtilis (strain 168).